A 322-amino-acid polypeptide reads, in one-letter code: MSNPNNGAEWQQVEADQLDSGLYYGRFALSPLTAKQASLLKKGLPEALLTEILCLRFTHAKIQNECVNLMNIVGIQESLDEILKNFGKIILTGKLEEFVGKGPFVAILDVRGPLNAMAVDIELPPGIKVEIETQHIATITEPIPFVVELKIELVSSTSKGETGITDEEGFSIDPNPPIQKVDTSIQCYDYQGEPFQTLFLDIWTDRTIHPHEALAQASRKIFGLLSLVFQAEYFQYNELENGLRYGKFCLYPMTKEQFQWIQTALNEALALDMSGESKHEGPVTDEEGDSIDPTFTPVQKWDITMNSYQYSGETFQGLLSRF.

The interval 1–232 (MSNPNNGAEW…GLLSLVFQAE (232 aa)) is alpha N-terminal domain (alpha-NTD). The interval 280–322 (EGPVTDEEGDSIDPTFTPVQKWDITMNSYQYSGETFQGLLSRF) is alpha C-terminal domain (alpha-CTD).

This sequence belongs to the RNA polymerase alpha chain family. As to quaternary structure, in plastids the minimal PEP RNA polymerase catalytic core is composed of four subunits: alpha, beta, beta', and beta''. When a (nuclear-encoded) sigma factor is associated with the core the holoenzyme is formed, which can initiate transcription.

Its subcellular location is the plastid. It localises to the chloroplast. The catalysed reaction is RNA(n) + a ribonucleoside 5'-triphosphate = RNA(n+1) + diphosphate. Functionally, DNA-dependent RNA polymerase catalyzes the transcription of DNA into RNA using the four ribonucleoside triphosphates as substrates. In Pelargonium hortorum (Common geranium), this protein is Putative DNA-directed RNA polymerase subunit alpha-like 2 (rpoAL2-A).